A 200-amino-acid chain; its full sequence is Flavin prenyltransferase UbiX (200 aa).

FMN is bound by residues 15–17 (GAS), Thr41, 102–105 (SMGT), and Arg137. Tyr167 and Lys183 together coordinate dimethylallyl phosphate.

Belongs to the UbiX/PAD1 family.

The enzyme catalyses dimethylallyl phosphate + FMNH2 = prenylated FMNH2 + phosphate. Flavin prenyltransferase that catalyzes the synthesis of the prenylated FMN cofactor (prenyl-FMN) for 4-hydroxy-3-polyprenylbenzoic acid decarboxylase UbiD. The prenyltransferase is metal-independent and links a dimethylallyl moiety from dimethylallyl monophosphate (DMAP) to the flavin N5 and C6 atoms of FMN. This Alkalihalophilus pseudofirmus (strain ATCC BAA-2126 / JCM 17055 / OF4) (Bacillus pseudofirmus) protein is Flavin prenyltransferase UbiX.